We begin with the raw amino-acid sequence, 327 residues long: Acyl-CoA desaturase (327 aa).

Topologically, residues 1–39 are cytoplasmic; it reads MPDREIKSPIWHPEPGTVEDVFDHTYKEKEGPKPPTVIV. Residues 40-60 traverse the membrane as a helical segment; that stretch reads WRNVILMSLLHLGALYGLFLF. Substrate is bound at residue Asn-42. Residues 61–64 are Lumenal-facing; sequence PSAR. A helical membrane pass occupies residues 65–85; the sequence is ALTWIWFFGCLLFSALGITAG. Residues 86 to 184 lie on the Cytoplasmic side of the membrane; that stretch reads AHRLWSHRSY…DKVVMFQRRF (99 aa). The Fe cation site is built by His-87 and His-92. The Histidine box-1 signature appears at 87–92; the sequence is HRLWSH. The substrate site is built by Asn-115, Arg-122, and Asp-123. Fe cation contacts are provided by His-124, His-127, and His-128. The short motif at 124–128 is the Histidine box-2 element; sequence HRVHH. Residues Arg-155 and Lys-156 each coordinate substrate. A helical membrane pass occupies residues 185–204; that stretch reads YKPSVLLMCFFVPTFVPWYV. Residues 205–208 are Lumenal-facing; that stretch reads WGES. The chain crosses the membrane as a helical span at residues 209–230; the sequence is LWVAYFVPALLRYALVLNATWL. Trp-229 lines the substrate pocket. The Cytoplasmic portion of the chain corresponds to 231 to 327; that stretch reads VNSAAHMWGN…RTGDGSHWSG (97 aa). Residues His-236, His-265, His-268, and His-269 each coordinate Fe cation. Positions 265–269 match the Histidine box-3 motif; that stretch reads HNYHH.

The protein belongs to the fatty acid desaturase type 1 family. Fe(2+) is required as a cofactor.

It localises to the endoplasmic reticulum membrane. It catalyses the reaction octadecanoyl-CoA + 2 Fe(II)-[cytochrome b5] + O2 + 2 H(+) = (9Z)-octadecenoyl-CoA + 2 Fe(III)-[cytochrome b5] + 2 H2O. Functionally, stearoyl-CoA desaturase that utilizes O(2) and electrons from reduced cytochrome b5 to introduce the first double bond into saturated fatty acyl-CoA substrates. Has high specificity and catalyzes the insertion of a cis double bond at the delta-9 position into fatty acyl-CoA substrates including palmitoyl-CoA and stearoyl-CoA. Contributes to the biosynthesis of membrane phospholipids, cholesterol esters and triglycerides. The protein is Acyl-CoA desaturase of Cyprinus carpio (Common carp).